Reading from the N-terminus, the 309-residue chain is Neuropeptide-like 1 (309 aa).

The signal sequence occupies residues 1-28; it reads MQAVLQSAHSSRRLMLLLSMLLNAAIQP. The propeptide occupies 29-99; the sequence is RSIIVSATDD…GEYPDYLEED (71 aa). The disordered stretch occupies residues 126–147; sequence GQLPTAEPGEDYGDADSGEPSE. A compositionally biased stretch (acidic residues) spans 133–144; sequence PGEDYGDADSGE. Tyr-164 carries the post-translational modification Tyrosine amide. Position 182 is an asparagine amide (Asn-182).

In terms of tissue distribution, MTYamide peptide: Expressed in the larval CNS (at protein level). NAP peptide: Expressed in the larval CNS (at protein level). IPNamide peptide: Expressed in the ventral ganglion of the third larval instar and adult brain (at protein level).

The protein resides in the secreted. Its function is as follows. Acts as a ligand for the receptor-type guanylate cyclase Gyc76C. Stimulates Gyc76c-dependent cGMP production and modulates the IMD innate immune pathway in response to salt stress by inducing nuclear translocation of NF-kappa-B protein Rel which leads to increased expression of the antimicrobial peptide diptericin. Does not appear to play a role in Gyc76C-mediated wing development. The protein is Neuropeptide-like 1 (Nplp1) of Drosophila melanogaster (Fruit fly).